Here is a 362-residue protein sequence, read N- to C-terminus: Alpha-tubulin N-acetyltransferase (362 aa).

The region spanning 1–177 is the N-acetyltransferase domain; sequence MQFGCNVAEA…NNFLMLDASI (177 aa). Acetyl-CoA-binding positions include 111–124 and 147–156; these read FYTHETVQRRGIGT and SPKLLAFLSK.

This sequence belongs to the acetyltransferase ATAT1 family.

The catalysed reaction is L-lysyl-[alpha-tubulin] + acetyl-CoA = N(6)-acetyl-L-lysyl-[alpha-tubulin] + CoA + H(+). Its function is as follows. Specifically acetylates 'Lys-40' in alpha-tubulin on the lumenal side of microtubules. Promotes microtubule destabilization and accelerates microtubule dynamics; this activity may be independent of acetylation activity. Acetylates alpha-tubulin with a slow enzymatic rate, due to a catalytic site that is not optimized for acetyl transfer. Enters the microtubule through each end and diffuses quickly throughout the lumen of microtubules. Acetylates only long/old microtubules because of its slow acetylation rate since it does not have time to act on dynamically unstable microtubules before the enzyme is released. The sequence is that of Alpha-tubulin N-acetyltransferase from Giardia intestinalis (strain ATCC 50803 / WB clone C6) (Giardia lamblia).